A 349-amino-acid chain; its full sequence is Protein-glutamate methylesterase/protein-glutamine glutaminase (349 aa).

The Response regulatory domain maps to 5 to 122 (RVLSVDDSAL…REGMLAYSEM (118 aa)). Position 56 is a 4-aspartylphosphate (Asp-56). In terms of domain architecture, CheB-type methylesterase spans 152–344 (LLSSEKLIAI…QQMLAKISAG (193 aa)). Active-site residues include Ser-164, His-190, and Asp-286.

This sequence belongs to the CheB family. Post-translationally, phosphorylated by CheA. Phosphorylation of the N-terminal regulatory domain activates the methylesterase activity.

Its subcellular location is the cytoplasm. It carries out the reaction [protein]-L-glutamate 5-O-methyl ester + H2O = L-glutamyl-[protein] + methanol + H(+). The catalysed reaction is L-glutaminyl-[protein] + H2O = L-glutamyl-[protein] + NH4(+). Functionally, involved in chemotaxis. Part of a chemotaxis signal transduction system that modulates chemotaxis in response to various stimuli. Catalyzes the demethylation of specific methylglutamate residues introduced into the chemoreceptors (methyl-accepting chemotaxis proteins or MCP) by CheR. Also mediates the irreversible deamidation of specific glutamine residues to glutamic acid. This is Protein-glutamate methylesterase/protein-glutamine glutaminase from Salmonella choleraesuis (strain SC-B67).